Reading from the N-terminus, the 442-residue chain is Na(+)/H(+) antiporter NhaA (442 aa).

11 helical membrane passes run 32–52 (IGGG…NSPW), 73–93 (LTLA…VAGL), 111–131 (AVPV…YALV), 139–159 (AGWA…LAVI), 170–190 (FLLT…AVVY), 193–213 (HLSI…TLLV), 234–254 (VHAS…AVPV), 284–304 (VAVP…LSGL), 316–336 (VVLG…FLVA), 352–372 (VLGL…IGEL), and 383–403 (HVKI…AVVL). Over residues 423-435 (HDGIPDVYQDLHR) the composition is skewed to basic and acidic residues. The tract at residues 423–442 (HDGIPDVYQDLHRSSPRPWG) is disordered.

This sequence belongs to the NhaA Na(+)/H(+) (TC 2.A.33) antiporter family.

The protein resides in the cell membrane. The enzyme catalyses Na(+)(in) + 2 H(+)(out) = Na(+)(out) + 2 H(+)(in). Its function is as follows. Na(+)/H(+) antiporter that extrudes sodium in exchange for external protons. The polypeptide is Na(+)/H(+) antiporter NhaA (Frankia casuarinae (strain DSM 45818 / CECT 9043 / HFP020203 / CcI3)).